The sequence spans 235 residues: MNCPIIDQLERLTEHHFKDEERLKKALTHSSVQDSEQGNYERLEFLGDRVLGLLIAEMLYKLFPQASEGELSVRLNGLVNAQTCADIALEMGLPDMIHVGFEMRNLKGRRLTNMHADVIEALIAVMYLDGGLKSVRPFIRRYWQSRAKQMDAGRRDAKTELQEWAHVQGGVQPHYRVVKRSGPDHDPVFMVEVSILGFAPEIGQGNSKRCAERMAAEKVLRREGIWKTMGKNDHE.

Positions 6 to 131 (IDQLERLTEH…LIAVMYLDGG (126 aa)) constitute an RNase III domain. A Mg(2+)-binding site is contributed by Glu44. The active site involves Asp48. Mg(2+) is bound by residues Asp117 and Glu120. Glu120 is an active-site residue. In terms of domain architecture, DRBM spans 156–225 (DAKTELQEWA…AEKVLRREGI (70 aa)).

Belongs to the ribonuclease III family. Homodimer. It depends on Mg(2+) as a cofactor.

It localises to the cytoplasm. It carries out the reaction Endonucleolytic cleavage to 5'-phosphomonoester.. Its function is as follows. Digests double-stranded RNA. Involved in the processing of primary rRNA transcript to yield the immediate precursors to the large and small rRNAs (23S and 16S). Processes some mRNAs, and tRNAs when they are encoded in the rRNA operon. Processes pre-crRNA and tracrRNA of type II CRISPR loci if present in the organism. The protein is Ribonuclease 3 of Bartonella quintana (strain Toulouse) (Rochalimaea quintana).